The following is a 139-amino-acid chain: S-adenosylmethionine decarboxylase proenzyme (139 aa).

Ser63 (schiff-base intermediate with substrate; via pyruvic acid) is an active-site residue. Ser63 bears the Pyruvic acid (Ser); by autocatalysis mark. His68 acts as the Proton acceptor; for processing activity in catalysis. Catalysis depends on Cys83, which acts as the Proton donor; for catalytic activity.

This sequence belongs to the prokaryotic AdoMetDC family. Type 1 subfamily. In terms of assembly, heterotetramer of two alpha and two beta chains arranged as a dimer of alpha/beta heterodimers. Pyruvate is required as a cofactor. In terms of processing, is synthesized initially as an inactive proenzyme. Formation of the active enzyme involves a self-maturation process in which the active site pyruvoyl group is generated from an internal serine residue via an autocatalytic post-translational modification. Two non-identical subunits are generated from the proenzyme in this reaction, and the pyruvate is formed at the N-terminus of the alpha chain, which is derived from the carboxyl end of the proenzyme. The post-translation cleavage follows an unusual pathway, termed non-hydrolytic serinolysis, in which the side chain hydroxyl group of the serine supplies its oxygen atom to form the C-terminus of the beta chain, while the remainder of the serine residue undergoes an oxidative deamination to produce ammonia and the pyruvoyl group blocking the N-terminus of the alpha chain.

It carries out the reaction S-adenosyl-L-methionine + H(+) = S-adenosyl 3-(methylsulfanyl)propylamine + CO2. Its pathway is amine and polyamine biosynthesis; S-adenosylmethioninamine biosynthesis; S-adenosylmethioninamine from S-adenosyl-L-methionine: step 1/1. Its function is as follows. Catalyzes the decarboxylation of S-adenosylmethionine to S-adenosylmethioninamine (dcAdoMet), the propylamine donor required for the synthesis of the polyamines spermine and spermidine from the diamine putrescine. The chain is S-adenosylmethionine decarboxylase proenzyme from Pyrococcus abyssi (strain GE5 / Orsay).